Consider the following 187-residue polypeptide: Methylamine dehydrogenase light chain (187 aa).

The tat-type signal signal peptide spans Met1–Gln57. Cystine bridges form between Cys79–Cys144, Cys85–Cys117, Cys92–Cys177, Cys94–Cys142, Cys102–Cys133, and Cys134–Cys165. At Trp113 the chain carries Tryptophylquinone. The segment at residues Trp113–Trp164 is a cross-link (tryptophan tryptophylquinone (Trp-Trp)).

The protein belongs to the aromatic amine dehydrogenase light chain family. In terms of assembly, heterotetramer of two light and two heavy chains. Tryptophan tryptophylquinone residue is required as a cofactor. Predicted to be exported by the Tat system. The position of the signal peptide cleavage has not been experimentally proven. In terms of processing, tryptophan tryptophylquinone (TTQ) is formed by oxidation of the indole ring of a tryptophan to form tryptophylquinone followed by covalent cross-linking with another tryptophan residue.

It localises to the periplasm. It carries out the reaction 2 oxidized [amicyanin] + methylamine + H2O = 2 reduced [amicyanin] + formaldehyde + NH4(+) + 2 H(+). The protein operates within one-carbon metabolism; methylamine degradation; formaldehyde from methylamine: step 1/1. Its function is as follows. Methylamine dehydrogenase carries out the oxidation of methylamine. Electrons are passed from methylamine dehydrogenase to amicyanin. In Methylophilus methylotrophus (Bacterium W3A1), this protein is Methylamine dehydrogenase light chain (mauA).